Reading from the N-terminus, the 178-residue chain is Nuclear transcription factor Y subunit B-2 (178 aa).

A DNA-binding region spans residues 39–45 (LPIANIS). The tract at residues 66 to 77 (LQECVSEFISFV) is subunit association domain (SAD). Positions 131-156 (SSKAGDGSVKKDTIGPHSGASSSSAQ) are disordered.

It belongs to the NFYB/HAP3 subunit family. As to quaternary structure, heterotrimeric transcription factor composed of three components, NF-YA, NF-YB and NF-YC. NF-YB and NF-YC must interact and dimerize for NF-YA association and DNA binding. Interacts with NFYC4 and NFYC6. As to expression, ubiquitous.

The protein localises to the nucleus. Its function is as follows. Component of the NF-Y/HAP transcription factor complex. The NF-Y complex stimulates the transcription of various genes by recognizing and binding to a CCAAT motif in promoters. May regulate the expression of photosynthetic genes, and may be involved in chloroplast and amyloplast development. This is Nuclear transcription factor Y subunit B-2 (NFYB2) from Oryza sativa subsp. japonica (Rice).